Here is a 353-residue protein sequence, read N- to C-terminus: Uroporphyrinogen decarboxylase (353 aa).

Substrate contacts are provided by residues R29–R33, D78, Y154, S209, and H322.

The protein belongs to the uroporphyrinogen decarboxylase family. Homodimer.

It is found in the cytoplasm. The catalysed reaction is uroporphyrinogen III + 4 H(+) = coproporphyrinogen III + 4 CO2. Its pathway is porphyrin-containing compound metabolism; protoporphyrin-IX biosynthesis; coproporphyrinogen-III from 5-aminolevulinate: step 4/4. Its function is as follows. Catalyzes the decarboxylation of four acetate groups of uroporphyrinogen-III to yield coproporphyrinogen-III. The sequence is that of Uroporphyrinogen decarboxylase from Bacillus velezensis (strain DSM 23117 / BGSC 10A6 / LMG 26770 / FZB42) (Bacillus amyloliquefaciens subsp. plantarum).